The chain runs to 405 residues: Phosphatidylinositol 5-phosphate 4-kinase type-2 alpha (405 aa).

Residues 32-404 (ASDPLLSVLM…RFLDFIANIL (373 aa)) enclose the PIPK domain. A disordered region spans residues 287 to 326 (QEEVECEENDGEDEGESDGTHPIGTPPDSPGNTLNSSLPL). Residues 288–303 (EEVECEENDGEDEGES) show a composition bias toward acidic residues.

As to quaternary structure, homodimer. In terms of processing, phosphorylated in tyrosines. Phosphorylation is induced by light and increases kinase activity.

The protein localises to the cell membrane. Its subcellular location is the nucleus. The protein resides in the lysosome. It localises to the cytoplasm. The catalysed reaction is a 1,2-diacyl-sn-glycero-3-phospho-(1D-myo-inositol-5-phosphate) + ATP = a 1,2-diacyl-sn-glycero-3-phospho-(1D-myo-inositol-4,5-bisphosphate) + ADP + H(+). It carries out the reaction 1,2-dihexadecanoyl-sn-glycero-3-phospho-(1D-myo-inositol-5-phosphate) + ATP = 1,2-dihexadecanoyl-sn-glycero-3-phospho-(1D-myo-inositol-4,5-bisphosphate) + ADP + H(+). It catalyses the reaction 1,2-dihexadecanoyl-sn-glycero-3-phospho-(1D-myo-inositol-5-phosphate) + GTP = 1,2-dihexadecanoyl-sn-glycero-3-phospho-(1D-myo-inositol-4,5-bisphosphate) + GDP + H(+). Its activity is regulated as follows. In rod outer segments, activated by light. In terms of biological role, catalyzes the phosphorylation of phosphatidylinositol 5-phosphate (PtdIns5P) on the fourth hydroxyl of the myo-inositol ring, to form phosphatidylinositol 4,5-bisphosphate (PtdIns(4,5)P2). Has both ATP- and GTP-dependent kinase activities. This Gallus gallus (Chicken) protein is Phosphatidylinositol 5-phosphate 4-kinase type-2 alpha (PIP4K2A).